A 278-amino-acid chain; its full sequence is MSQEGSLGTKASSFEPQDIKVFHVKRSTRDLETLNKSLHRGDVYNTELIEKVFPRRTKKCVIHKDVIVKDGRVDCDLDIMDEGLDDINEEEFPLYHVGCIVVALMPHGKNLQGKVSVEVLDTRLVDGASRISRTLMDMSKPLSACADFPGYFISTSDLLNGYTLHLSITTTDLQFVDGVHPFSVQLMSIGRFCGEDMKTRYAITETSKMLHQNILNTEGDGELIPRGVQVQKVPDTLVMPEVFETIKKFGLKTNGTLRQEGRDKGDNRRVGVGESPTN.

The disordered stretch occupies residues 256–278 (TLRQEGRDKGDNRRVGVGESPTN). A compositionally biased stretch (basic and acidic residues) spans 259–271 (QEGRDKGDNRRVG).

The protein belongs to the tobamoviruses movement protein family.

This is Movement protein from Vitis vinifera (Grape).